A 658-amino-acid chain; its full sequence is Probable replication factor A 73 kDa subunit (658 aa).

Disordered stretches follow at residues 134–155 (PEVK…RPNI) and 169–222 (SEFQ…TERG). Positions 236 to 326 (FRIHGMVSRK…TLRNDSVVEA (91 aa)) form a DNA-binding region, OB. The C4-type zinc finger occupies 518–539 (CASEGCQKKVIESDGEYRCEKC).

This sequence belongs to the replication factor A protein 1 family. In terms of assembly, component of the heterotrimeric canonical replication protein A complex (RPA).

The protein resides in the nucleus. Its function is as follows. As part of the heterotrimeric replication protein A complex (RPA/RP-A), binds and stabilizes single-stranded DNA intermediates, that form during DNA replication or upon DNA stress. It prevents their reannealing and in parallel, recruits and activates different proteins and complexes involved in DNA metabolism. Thereby, it plays an essential role both in DNA replication and the cellular response to DNA damage. The sequence is that of Probable replication factor A 73 kDa subunit from Caenorhabditis briggsae.